Consider the following 367-residue polypeptide: Phospho-N-acetylmuramoyl-pentapeptide-transferase (367 aa).

10 helical membrane-spanning segments follow: residues 13–33 (ISGIGLASSLAAGLGIAALTL), 49–69 (LPLLLCTIASAIAGYFVVPLL), 95–115 (MGGIFFIPVAVVGACVLSNFA), 119–139 (LAVSALTLSYGLIGWIDDWQI), 154–174 (LALQICFAAAFCLWLMFNQPA), 183–203 (WVSFALPLGFLFWPLAGFVLV), 215–235 (IDGLAGGTVAIALLALGAIVA), 237–257 (TSPALMVFCAALSGSCLGFLA), 281–301 (AVALLTNSLVALFILSGIFFV), and 347–367 (VSSFYVIATILAVICLAIAPF).

This sequence belongs to the glycosyltransferase 4 family. MraY subfamily. It depends on Mg(2+) as a cofactor.

It localises to the cell inner membrane. The catalysed reaction is UDP-N-acetyl-alpha-D-muramoyl-L-alanyl-gamma-D-glutamyl-meso-2,6-diaminopimeloyl-D-alanyl-D-alanine + di-trans,octa-cis-undecaprenyl phosphate = di-trans,octa-cis-undecaprenyl diphospho-N-acetyl-alpha-D-muramoyl-L-alanyl-D-glutamyl-meso-2,6-diaminopimeloyl-D-alanyl-D-alanine + UMP. The protein operates within cell wall biogenesis; peptidoglycan biosynthesis. Its function is as follows. Catalyzes the initial step of the lipid cycle reactions in the biosynthesis of the cell wall peptidoglycan: transfers peptidoglycan precursor phospho-MurNAc-pentapeptide from UDP-MurNAc-pentapeptide onto the lipid carrier undecaprenyl phosphate, yielding undecaprenyl-pyrophosphoryl-MurNAc-pentapeptide, known as lipid I. The chain is Phospho-N-acetylmuramoyl-pentapeptide-transferase from Trichormus variabilis (strain ATCC 29413 / PCC 7937) (Anabaena variabilis).